We begin with the raw amino-acid sequence, 233 residues long: Lipoprotein-releasing system ATP-binding protein LolD (233 aa).

Residues 6 to 233 (LQCDNLCKRY…TAELSLMGAE (228 aa)) form the ABC transporter domain. Residue 42–49 (GSSGSGKS) participates in ATP binding.

The protein belongs to the ABC transporter superfamily. Lipoprotein translocase (TC 3.A.1.125) family. As to quaternary structure, the complex is composed of two ATP-binding proteins (LolD) and two transmembrane proteins (LolC and LolE).

It is found in the cell inner membrane. Its function is as follows. Part of the ABC transporter complex LolCDE involved in the translocation of mature outer membrane-directed lipoproteins, from the inner membrane to the periplasmic chaperone, LolA. Responsible for the formation of the LolA-lipoprotein complex in an ATP-dependent manner. The protein is Lipoprotein-releasing system ATP-binding protein LolD of Salmonella paratyphi A (strain ATCC 9150 / SARB42).